Here is a 475-residue protein sequence, read N- to C-terminus: MSQLDVLILDDEESIRNLIAANLKDEGFNPKVAANSTQALKIISEKPVSAVILDIWLQGSEIDGLGVLEIIKKRYPLIPVIIISGHGTIETAVNAIKMGAYDYIEKPFNNDKLIILLKRACEVTKLKRENIDLKSKVIDKTELVGGCSVTLKYKMEIEKAASSSSRIMIHGKVGSGKELAARLIHKQSKRVNNPFIIFSPTCMTTEKINQELFGESEKQENNNKRPTILEFANNGTLYIDEVSNIPIPIQVKLLKFLKDQTITKPCGKKTKVDIKIITSTSKNIQDEVNNGKFLEDLYYRLNVFSLKVPSLYERKEDIPLLVKYFVKQLSKFSGLKERHFSDEAITALQSYEWPGNIRQLRNVVEWTLIMNPLTTGNNEIIKPYMIPSEILANSANLTKLEDSFDMLSMPLREAREVFERQYLSAQMSRFNNNISKTSSFVGMERSALHRKLKLLSLHIPPTNKINEEEYEKANA.

Positions 5-121 (DVLILDDEES…KLIILLKRAC (117 aa)) constitute a Response regulatory domain. Asp-54 is modified (4-aspartylphosphate). The Sigma-54 factor interaction domain maps to 143 to 369 (LVGGCSVTLK…LRNVVEWTLI (227 aa)). ATP contacts are provided by residues 171–178 (GKVGSGKE) and 232–241 (ANNGTLYIDE).

Its function is as follows. Member of the two-component regulatory system RT0550/RT0603. In Rickettsia typhi (strain ATCC VR-144 / Wilmington), this protein is Putative response regulator NtrX-like.